The chain runs to 974 residues: Apical junction component 1 homolog (974 aa).

Disordered stretches follow at residues 23-137 (PGLT…PSYP), 201-233 (ARSSRSCAPRETTSWARTAPQFHGLTVPGPRHV), and 306-326 (CSRPYLSEEPPRPSPRRGGSY). Position 52 is a phosphoserine (Ser52). The span at 69 to 79 (EPPPPEPAPPR) shows a compositional bias: pro residues. Over residues 116–134 (RGREAQRAVRVEGSPRREP) the composition is skewed to basic and acidic residues. Phosphoserine is present on Ser129. Positions 201-216 (ARSSRSCAPRETTSWA) are enriched in polar residues. Arg322 is subject to Omega-N-methylarginine. 3 positions are modified to phosphoserine: Ser468, Ser509, and Ser512. Residues 539–576 (DLRSVDRPTAKGWELPGGRPRQPVSTVPEGPASSRQRS) are disordered. Phosphoserine is present on Ser593. The tract at residues 618 to 661 (AGPGGATLLAPSRSPPASAGSTEEPTGSGEAADASPEPSADEDD) is disordered. Over residues 623–636 (ATLLAPSRSPPASA) the composition is skewed to low complexity. The residue at position 749 (Arg749) is an Asymmetric dimethylarginine; alternate. Position 749 is an omega-N-methylarginine; alternate (Arg749).

It localises to the apical cell membrane. Its subcellular location is the cell projection. The protein resides in the cilium. The protein localises to the cell junction. It is found in the adherens junction. Functionally, may be involved in the control of adherens junction integrity. This Mus musculus (Mouse) protein is Apical junction component 1 homolog (Ajm1).